We begin with the raw amino-acid sequence, 594 residues long: Adenine deaminase 1 (594 aa).

This sequence belongs to the metallo-dependent hydrolases superfamily. Adenine deaminase family. It depends on Mn(2+) as a cofactor.

It catalyses the reaction adenine + H2O + H(+) = hypoxanthine + NH4(+). This Latilactobacillus sakei subsp. sakei (strain 23K) (Lactobacillus sakei subsp. sakei) protein is Adenine deaminase 1.